A 572-amino-acid polypeptide reads, in one-letter code: Squalene monooxygenase (572 aa).

Residues 1-19 lie on the Cytoplasmic side of the membrane; the sequence is MWTFLGIATFTYFYKKCGD. The tract at residues 1-98 is interaction with MARCHF6; the sequence is MWTFLGIATF…EQLESKKCRK (98 aa). Residues 20-40 lie within the membrane without spanning it; it reads VTLANKELLLCVLVFLSLGLV. Residues 41-572 lie on the Cytoplasmic side of the membrane; it reads LSYRCRHRHG…IYSEMKYLVH (532 aa). The interval 61 to 72 is required for degradation in response to high membrane cholesterol levels; the sequence is QFAAFSDILSAL. Positions 116 to 572 are sufficient for enzyme activity; it reads TSFVTDPEVI…IYSEMKYLVH (457 aa). FAD contacts are provided by residues 131–132, 151–152, Arg-159, Arg-232, Val-248, Asp-406, and Met-419; these read VL and ER. Residues 514–572 are hydrophobic; mediates interaction with membranes; sequence PLVLIRHFFSVAIYATYFCFKSEPWATKPRALFSSGAVLYKACSILFPLIYSEMKYLVH.

Belongs to the squalene monooxygenase family. In terms of assembly, interacts (via N-terminal domain) with MARCHF6. Interacts with SMIM22; this interaction modulates lipid droplet formation. It depends on FAD as a cofactor. Ubiquitinated by MARCHF6 in response to high cholesterol levels in intracellular membranes, leading to proteasomal degradation. In terms of tissue distribution, detected in liver.

Its subcellular location is the microsome membrane. The protein localises to the endoplasmic reticulum membrane. The catalysed reaction is squalene + reduced [NADPH--hemoprotein reductase] + O2 = (S)-2,3-epoxysqualene + oxidized [NADPH--hemoprotein reductase] + H2O + H(+). It functions in the pathway terpene metabolism; lanosterol biosynthesis; lanosterol from farnesyl diphosphate: step 2/3. Catalyzes the stereospecific oxidation of squalene to (S)-2,3-epoxysqualene, and is considered to be a rate-limiting enzyme in steroid biosynthesis. This Mus musculus (Mouse) protein is Squalene monooxygenase (Sqle).